Consider the following 344-residue polypeptide: Uroporphyrinogen decarboxylase (344 aa).

Substrate contacts are provided by residues 26–30 (RQAGR), Phe45, Asp75, Tyr151, Ser206, and His320.

Belongs to the uroporphyrinogen decarboxylase family. As to quaternary structure, homodimer.

The protein resides in the cytoplasm. It catalyses the reaction uroporphyrinogen III + 4 H(+) = coproporphyrinogen III + 4 CO2. The protein operates within porphyrin-containing compound metabolism; protoporphyrin-IX biosynthesis; coproporphyrinogen-III from 5-aminolevulinate: step 4/4. Functionally, catalyzes the decarboxylation of four acetate groups of uroporphyrinogen-III to yield coproporphyrinogen-III. This chain is Uroporphyrinogen decarboxylase, found in Staphylococcus epidermidis (strain ATCC 35984 / DSM 28319 / BCRC 17069 / CCUG 31568 / BM 3577 / RP62A).